The primary structure comprises 510 residues: D-alanine--D-alanyl carrier protein ligase (510 aa).

Residue 157-158 (TS) coordinates ATP. Aspartate 202 is a binding site for D-alanine. 297-302 (NTYGPT) contributes to the ATP binding site. Valine 306 serves as a coordination point for D-alanine. Residues aspartate 389 and lysine 498 each coordinate ATP. A D-alanine-binding site is contributed by lysine 498.

The protein belongs to the ATP-dependent AMP-binding enzyme family. DltA subfamily.

Its subcellular location is the cytoplasm. The enzyme catalyses holo-[D-alanyl-carrier protein] + D-alanine + ATP = D-alanyl-[D-alanyl-carrier protein] + AMP + diphosphate. It participates in cell wall biogenesis; lipoteichoic acid biosynthesis. In terms of biological role, catalyzes the first step in the D-alanylation of lipoteichoic acid (LTA), the activation of D-alanine and its transfer onto the D-alanyl carrier protein (Dcp) DltC. In an ATP-dependent two-step reaction, forms a high energy D-alanyl-AMP intermediate, followed by transfer of the D-alanyl residue as a thiol ester to the phosphopantheinyl prosthetic group of the Dcp. D-alanylation of LTA plays an important role in modulating the properties of the cell wall in Gram-positive bacteria, influencing the net charge of the cell wall. This chain is D-alanine--D-alanyl carrier protein ligase, found in Listeria innocua serovar 6a (strain ATCC BAA-680 / CLIP 11262).